Here is a 411-residue protein sequence, read N- to C-terminus: 1-deoxy-D-xylulose 5-phosphate reductoisomerase (411 aa).

Residues Thr-11, Gly-12, Ser-13, Ile-14, and Asn-124 each contribute to the NADPH site. Residue Lys-125 participates in 1-deoxy-D-xylulose 5-phosphate binding. Glu-126 lines the NADPH pocket. Asp-150 is a Mn(2+) binding site. 1-deoxy-D-xylulose 5-phosphate is bound by residues Ser-151, Glu-152, Ser-186, and His-209. A Mn(2+)-binding site is contributed by Glu-152. Gly-215 is a binding site for NADPH. Ser-222, Asn-227, Lys-228, and Glu-231 together coordinate 1-deoxy-D-xylulose 5-phosphate. Position 231 (Glu-231) interacts with Mn(2+).

The protein belongs to the DXR family. Mg(2+) is required as a cofactor. It depends on Mn(2+) as a cofactor.

It carries out the reaction 2-C-methyl-D-erythritol 4-phosphate + NADP(+) = 1-deoxy-D-xylulose 5-phosphate + NADPH + H(+). It functions in the pathway isoprenoid biosynthesis; isopentenyl diphosphate biosynthesis via DXP pathway; isopentenyl diphosphate from 1-deoxy-D-xylulose 5-phosphate: step 1/6. Its function is as follows. Catalyzes the NADPH-dependent rearrangement and reduction of 1-deoxy-D-xylulose-5-phosphate (DXP) to 2-C-methyl-D-erythritol 4-phosphate (MEP). The polypeptide is 1-deoxy-D-xylulose 5-phosphate reductoisomerase (Psychrobacter sp. (strain PRwf-1)).